The chain runs to 1154 residues: DNA-directed RNA polymerase, mitochondrial (1154 aa).

A mitochondrion-targeting transit peptide spans 1 to 30; it reads MLRRKIQTYLSRSHIRRGLCGLRFFQTQRL. Residues 221 to 243 are disordered; that stretch reads ESENGKDQNGDSSLKEKQPDVET. A compositionally biased stretch (basic and acidic residues) spans 223–240; the sequence is ENGKDQNGDSSLKEKQPD. Catalysis depends on residues aspartate 821, lysine 890, and aspartate 1061.

The protein belongs to the phage and mitochondrial RNA polymerase family.

Its subcellular location is the mitochondrion. The enzyme catalyses RNA(n) + a ribonucleoside 5'-triphosphate = RNA(n+1) + diphosphate. Functionally, DNA-dependent RNA polymerase catalyzes the transcription of DNA into RNA using the four ribonucleoside triphosphates as substrates. Combines in the mitochondrion with mitochondrial transcription factor mtf1 as a holoenzyme to recognize and initiate transcription at the core mitochondrial promoters. This Schizosaccharomyces pombe (strain 972 / ATCC 24843) (Fission yeast) protein is DNA-directed RNA polymerase, mitochondrial (rpo41).